We begin with the raw amino-acid sequence, 59 residues long: Large ribosomal subunit protein uL30 (59 aa).

The protein belongs to the universal ribosomal protein uL30 family. Part of the 50S ribosomal subunit.

The polypeptide is Large ribosomal subunit protein uL30 (Haemophilus influenzae (strain 86-028NP)).